Reading from the N-terminus, the 223-residue chain is Endonuclease NucS (223 aa).

Belongs to the NucS endonuclease family.

Its subcellular location is the cytoplasm. Functionally, cleaves both 3' and 5' ssDNA extremities of branched DNA structures. This is Endonuclease NucS from Streptomyces coelicolor (strain ATCC BAA-471 / A3(2) / M145).